An 84-amino-acid polypeptide reads, in one-letter code: Defensin-like protein 37 (84 aa).

An N-terminal signal peptide occupies residues 1–24; it reads MAVKLIYLFLFLYIALLISGRTMS. Disulfide bonds link Cys-46–Cys-67, Cys-52–Cys-79, and Cys-56–Cys-81.

It belongs to the DEFL family.

It is found in the secreted. This chain is Defensin-like protein 37 (EDA21), found in Arabidopsis thaliana (Mouse-ear cress).